The primary structure comprises 311 residues: Transcriptional regulatory protein MoaR1 (311 aa).

Residues 15–117 constitute a DNA-binding region (ompR/PhoB-type); that stretch reads LNATTAGAVQ…SEPPGYRLLI (103 aa).

This sequence belongs to the AfsR/DnrI/RedD regulatory family.

Its function is as follows. Acts as a positive transcriptional regulator of the molybdopterin biosynthesis moa1 locus, promoting the expression of the moaA1B1C1D1 genes. This chain is Transcriptional regulatory protein MoaR1 (moaR1), found in Mycobacterium bovis (strain BCG / Pasteur 1173P2).